The following is a 496-amino-acid chain: NADH-quinone oxidoreductase subunit N (496 aa).

The next 13 membrane-spanning stretches (helical) occupy residues 16–36 (SLSP…VGAI), 46–66 (CVFC…FNGL), 79–99 (ISII…PLAL), 116–136 (FLFM…LIIF), 166–186 (FAMG…FYLA), 208–228 (LIIL…LSLI), 245–267 (LAGY…IFAM), 278–298 (DMLY…ALVQ), 304–324 (MLAF…VANS), 331–351 (LFFY…MLWV), 382–402 (AVIM…SVFW), 422–442 (IIMI…VFMF), and 464–484 (VIVG…GAIL).

The protein belongs to the complex I subunit 2 family. As to quaternary structure, NDH-1 is composed of 14 different subunits. Subunits NuoA, H, J, K, L, M, N constitute the membrane sector of the complex.

It localises to the cell inner membrane. The enzyme catalyses a quinone + NADH + 5 H(+)(in) = a quinol + NAD(+) + 4 H(+)(out). In terms of biological role, NDH-1 shuttles electrons from NADH, via FMN and iron-sulfur (Fe-S) centers, to quinones in the respiratory chain. The immediate electron acceptor for the enzyme in this species is believed to be ubiquinone. Couples the redox reaction to proton translocation (for every two electrons transferred, four hydrogen ions are translocated across the cytoplasmic membrane), and thus conserves the redox energy in a proton gradient. This chain is NADH-quinone oxidoreductase subunit N, found in Campylobacter concisus (strain 13826).